A 219-amino-acid polypeptide reads, in one-letter code: Urease accessory protein UreG (219 aa).

The tract at residues 1-20 (MSALHSIPHRSKKLPPLRVG) is disordered. 23-30 (GPVGSGKT) lines the GTP pocket.

Belongs to the SIMIBI class G3E GTPase family. UreG subfamily. Homodimer. UreD, UreF and UreG form a complex that acts as a GTP-hydrolysis-dependent molecular chaperone, activating the urease apoprotein by helping to assemble the nickel containing metallocenter of UreC. The UreE protein probably delivers the nickel.

The protein localises to the cytoplasm. Its function is as follows. Facilitates the functional incorporation of the urease nickel metallocenter. This process requires GTP hydrolysis, probably effectuated by UreG. The chain is Urease accessory protein UreG from Methylibium petroleiphilum (strain ATCC BAA-1232 / LMG 22953 / PM1).